The sequence spans 187 residues: Dihydrofolate reductase (187 aa).

Positions 4–185 (PLNCIVAVSQ…IKYKFEVYEK (182 aa)) constitute a DHFR domain. NADP(+)-binding positions include Ala10 and 16–22 (GIGKNGD). Residue 31 to 36 (EFQYFQ) participates in substrate binding. 55–57 (RKT) serves as a coordination point for NADP(+). Arg71 contacts substrate. NADP(+) is bound by residues 77–79 (SRE) and 117–124 (GGSSVYKE).

The protein belongs to the dihydrofolate reductase family. Homodimer.

It is found in the mitochondrion. It localises to the cytoplasm. It catalyses the reaction (6S)-5,6,7,8-tetrahydrofolate + NADP(+) = 7,8-dihydrofolate + NADPH + H(+). Its pathway is cofactor biosynthesis; tetrahydrofolate biosynthesis; 5,6,7,8-tetrahydrofolate from 7,8-dihydrofolate: step 1/1. Its function is as follows. Key enzyme in folate metabolism. Contributes to the de novo mitochondrial thymidylate biosynthesis pathway. Catalyzes an essential reaction for de novo glycine and purine synthesis, and for DNA precursor synthesis. Binds its own mRNA and that of DHFR2. The chain is Dihydrofolate reductase (DHFR) from Bos taurus (Bovine).